A 507-amino-acid chain; its full sequence is Proton-coupled zinc antiporter SLC30A1 (507 aa).

The Cytoplasmic portion of the chain corresponds to 1 to 10 (MGCWGRNRGR). The chain crosses the membrane as a helical span at residues 11-31 (LLCMLLLTFMFMVLEVVVSRV). At 32-35 (TASL) the chain is on the extracellular side. A helical transmembrane segment spans residues 36-56 (AMLSDSFHMLSDVLALVVALV). Zn(2+)-binding residues include His-43 and Asp-47. Residues 57–78 (AERFARRTHATQKNTFGWIRAE) lie on the Cytoplasmic side of the membrane. A helical transmembrane segment spans residues 79–99 (VMGALVNAIFLTGLCFAILLE). Topologically, residues 100 to 113 (AVERFIEPHEMQQP) are extracellular. The chain crosses the membrane as a helical span at residues 114–134 (LVVLSVGVAGLLVNVLGLCLF). Residues 135–247 (HHHSGEGQGA…RAGQLNMRGV (113 aa)) lie on the Cytoplasmic side of the membrane. The disordered stretch occupies residues 140–218 (EGQGAGHGHS…EKLRSDDPVD (79 aa)). Residues 145-156 (GHGHSHGHGHGH) form a 6 X 2 AA approximate repeats of H-G region. Positions 147–165 (GHSHGHGHGHLAKGARKAG) are enriched in basic residues. Over residues 188–200 (TNTLVANTSNSNG) the composition is skewed to polar residues. The span at 204–215 (DQAEPEKLRSDD) shows a compositional bias: basic and acidic residues. A helical transmembrane segment spans residues 248-268 (FLHVLGDALGSVIVVVNALVF). His-250 and Asp-254 together coordinate Zn(2+). Topologically, residues 269–307 (YFSWKGCTEDDFCVNPCFPDPCKSSVELMNSTQAPMHEA) are extracellular. Asn-298 carries N-linked (GlcNAc...) asparagine glycosylation. A helical transmembrane segment spans residues 308-328 (GPCWVLYLDPTLCIIMVCILL). The Cytoplasmic portion of the chain corresponds to 329–507 (YTTYPLLKES…VPNKQPESSL (179 aa)). Phosphoserine is present on Ser-506.

The protein belongs to the cation diffusion facilitator (CDF) transporter (TC 2.A.4) family. SLC30A subfamily. Homodimer. Interacts with TMEM163. Interacts and forms a complex with TMC6 and TMC8; the interaction regulates zinc transport into the ER. Widely expressed. Detected in duodenum and jejunum but not in ileum and colon (at protein level). Expressed by neuroglial cells (at protein level).

Its subcellular location is the cell membrane. It localises to the basolateral cell membrane. The protein resides in the cytoplasmic vesicle membrane. It is found in the cytoplasm. The protein localises to the endoplasmic reticulum membrane. Its subcellular location is the golgi apparatus membrane. It localises to the nucleus membrane. The enzyme catalyses Zn(2+)(in) + 2 H(+)(out) = Zn(2+)(out) + 2 H(+)(in). Its activity is regulated as follows. Calcium-dependent. Zinc ion:proton antiporter that could function at the plasma membrane mediating zinc efflux from cells against its electrochemical gradient protecting them from intracellular zinc accumulation and toxicity. Alternatively, could prevent the transport to the plasma membrane of CACNB2, the L-type calcium channels regulatory subunit, through a yet to be defined mechanism. By modulating the expression of these channels at the plasma membrane, could prevent calcium and zinc influx into cells. By the same mechanism, could also prevent L-type calcium channels-mediated heavy metal influx into cells. In some cells, could also function as a zinc ion:proton antiporter mediating zinc entry into the lumen of cytoplasmic vesicles. In macrophages, can increase zinc ions concentration into the lumen of cytoplasmic vesicles containing engulfed bacteria and could help inactivate them. Forms a complex with TMC6/EVER1 and TMC8/EVER2 at the ER membrane of keratynocytes which facilitates zinc uptake into the ER. Down-regulates the activity of transcription factors induced by zinc and cytokines. This is Proton-coupled zinc antiporter SLC30A1 from Rattus norvegicus (Rat).